The primary structure comprises 602 residues: Multicopper oxidase aurL2 (602 aa).

The first 17 residues, 1-17 (MLFRFLALLPFVAGAFA), serve as a signal peptide directing secretion. 2 Plastocyanin-like domains span residues 38–149 (DIKI…VRDA) and 160–317 (IPLL…KYRC). Residues Asn52 and Asn80 are each glycosylated (N-linked (GlcNAc...) asparagine). The Cu cation site is built by His84, His86, His130, and His132. Residues Asn201, Asn247, Asn337, Asn383, Asn387, Asn419, and Asn424 are each glycosylated (N-linked (GlcNAc...) asparagine). The Plastocyanin-like 3 domain occupies 421 to 556 (TTPNYTLALE…QVMGMATVWV (136 aa)). Position 469 (His469) interacts with Cu cation. Asn482 and Asn486 each carry an N-linked (GlcNAc...) asparagine glycan.

Belongs to the multicopper oxidase family.

Its pathway is pigment biosynthesis. Its function is as follows. Multicopper oxidase; part of the gene cluster that mediates the biosynthesis of aurofusarin, a red mycelium pigment which is acting as a mycotoxin. The first step is performed by the polyketide synthase which condenses one acetyl-CoA and 6 malonyl-CoA units to form the first intermediate, the cyclic heptaketide and yellow pigment YWA1. The C2 hydroxyl group in the pyrone ring of YWA1 is probably formed during ring closure by an aldol-type cyclization reaction. The dehydratase aurZ then acts as the first tailoring enzyme in the aurofusarin biosynthetic pathway by converting YWA1 to nor-rubrofusarin. Nor-rubrofusarin is then methylated to rubrofusarin by the O-methyltransferase aurJ. Rubrofusarin is then transported across the plasma membrane by the rubrofusarin-specific pump aurT for further enzymatic processing by the extracellular complex composed of GIP1, aurF, aurO and aurS to yield aurofusarin. This is Multicopper oxidase aurL2 (aurL2) from Gibberella zeae (strain ATCC MYA-4620 / CBS 123657 / FGSC 9075 / NRRL 31084 / PH-1) (Wheat head blight fungus).